A 231-amino-acid polypeptide reads, in one-letter code: 2-C-methyl-D-erythritol 4-phosphate cytidylyltransferase (231 aa).

Belongs to the IspD/TarI cytidylyltransferase family. IspD subfamily.

The enzyme catalyses 2-C-methyl-D-erythritol 4-phosphate + CTP + H(+) = 4-CDP-2-C-methyl-D-erythritol + diphosphate. The protein operates within isoprenoid biosynthesis; isopentenyl diphosphate biosynthesis via DXP pathway; isopentenyl diphosphate from 1-deoxy-D-xylulose 5-phosphate: step 2/6. In terms of biological role, catalyzes the formation of 4-diphosphocytidyl-2-C-methyl-D-erythritol from CTP and 2-C-methyl-D-erythritol 4-phosphate (MEP). The polypeptide is 2-C-methyl-D-erythritol 4-phosphate cytidylyltransferase (Clostridium kluyveri (strain NBRC 12016)).